The following is a 325-amino-acid chain: Transaldolase (325 aa).

Lys-125 serves as the catalytic Schiff-base intermediate with substrate.

It belongs to the transaldolase family. Type 2 subfamily.

Its subcellular location is the cytoplasm. It carries out the reaction D-sedoheptulose 7-phosphate + D-glyceraldehyde 3-phosphate = D-erythrose 4-phosphate + beta-D-fructose 6-phosphate. It functions in the pathway carbohydrate degradation; pentose phosphate pathway; D-glyceraldehyde 3-phosphate and beta-D-fructose 6-phosphate from D-ribose 5-phosphate and D-xylulose 5-phosphate (non-oxidative stage): step 2/3. In terms of biological role, transaldolase is important for the balance of metabolites in the pentose-phosphate pathway. The chain is Transaldolase from Campylobacter jejuni subsp. jejuni serotype O:23/36 (strain 81-176).